Here is a 199-residue protein sequence, read N- to C-terminus: Recombination protein RecR (199 aa).

A C4-type zinc finger spans residues 58–73 (CQRCNNFSEEAVCQRC). A Toprim domain is found at 81–176 (ATLCVVEMPA…KVSRISRGVP (96 aa)).

This sequence belongs to the RecR family.

May play a role in DNA repair. It seems to be involved in an RecBC-independent recombinational process of DNA repair. It may act with RecF and RecO. This Azoarcus sp. (strain BH72) protein is Recombination protein RecR.